The following is a 648-amino-acid chain: Threonine--tRNA ligase (648 aa).

The TGS domain occupies Met-1–Thr-61. Residues Asp-240–Pro-539 are catalytic. Residues Cys-335, His-386, and His-516 each coordinate Zn(2+).

Belongs to the class-II aminoacyl-tRNA synthetase family. Homodimer. Requires Zn(2+) as cofactor.

The protein resides in the cytoplasm. It catalyses the reaction tRNA(Thr) + L-threonine + ATP = L-threonyl-tRNA(Thr) + AMP + diphosphate + H(+). In terms of biological role, catalyzes the attachment of threonine to tRNA(Thr) in a two-step reaction: L-threonine is first activated by ATP to form Thr-AMP and then transferred to the acceptor end of tRNA(Thr). Also edits incorrectly charged L-seryl-tRNA(Thr). The chain is Threonine--tRNA ligase from Flavobacterium johnsoniae (strain ATCC 17061 / DSM 2064 / JCM 8514 / BCRC 14874 / CCUG 350202 / NBRC 14942 / NCIMB 11054 / UW101) (Cytophaga johnsonae).